Reading from the N-terminus, the 319-residue chain is ATP-dependent 6-phosphofructokinase (319 aa).

Glycine 11 is an ATP binding site. Arginine 21–arginine 25 provides a ligand contact to ADP. ATP-binding positions include arginine 72–cysteine 73 and glycine 102–serine 105. Position 103 (aspartate 103) interacts with Mg(2+). Residue threonine 125 to aspartate 127 participates in substrate binding. The active-site Proton acceptor is the aspartate 127. Position 154 (arginine 154) interacts with ADP. Residues arginine 162 and methionine 169–arginine 171 contribute to the substrate site. ADP is bound by residues glycine 185–glutamate 187, arginine 211, and lysine 213–histidine 215. Substrate contacts are provided by residues glutamate 222, arginine 243, and histidine 249–arginine 252.

The protein belongs to the phosphofructokinase type A (PFKA) family. ATP-dependent PFK group I subfamily. Prokaryotic clade 'B1' sub-subfamily. Homotetramer. Mg(2+) is required as a cofactor.

It localises to the cytoplasm. The catalysed reaction is beta-D-fructose 6-phosphate + ATP = beta-D-fructose 1,6-bisphosphate + ADP + H(+). It functions in the pathway carbohydrate degradation; glycolysis; D-glyceraldehyde 3-phosphate and glycerone phosphate from D-glucose: step 3/4. Allosterically activated by ADP and other diphosphonucleosides, and allosterically inhibited by phosphoenolpyruvate. In terms of biological role, catalyzes the phosphorylation of D-fructose 6-phosphate to fructose 1,6-bisphosphate by ATP, the first committing step of glycolysis. This is ATP-dependent 6-phosphofructokinase from Bacillus cereus (strain B4264).